The chain runs to 393 residues: Polygalacturonase (393 aa).

Residues 1-23 form the signal peptide; that stretch reads MANRRSLFSLSLIFVFMINSAIA. PbH1 repeat units lie at residues 115-136, 178-204, 205-226, 228-248, 258-279, and 288-309; these read VNGV…WACK, FQNV…HVQM, SSGV…SIGP, TSNL…SIGS, VQNV…RIKS, and ARNI…VIDQ. The active-site Proton donor is Asp-219. Residues Cys-221 and Cys-238 are joined by a disulfide bond. Residue His-242 is part of the active site. N-linked (GlcNAc...) asparagine glycosylation is present at Asn-260. 2 disulfides stabilise this stretch: Cys-349-Cys-355 and Cys-376-Cys-392.

Belongs to the glycosyl hydrolase 28 family.

The protein resides in the secreted. It localises to the cell wall. The enzyme catalyses (1,4-alpha-D-galacturonosyl)n+m + H2O = (1,4-alpha-D-galacturonosyl)n + (1,4-alpha-D-galacturonosyl)m.. In terms of biological role, acts in concert with the pectinesterase, in the ripening process. Is involved in cell wall metabolism, specifically in polyuronide degradation. The polypeptide is Polygalacturonase (Prunus persica (Peach)).